Reading from the N-terminus, the 216-residue chain is Protein-L-isoaspartate O-methyltransferase (216 aa).

S62 is an active-site residue.

This sequence belongs to the methyltransferase superfamily. L-isoaspartyl/D-aspartyl protein methyltransferase family.

The protein resides in the cytoplasm. It catalyses the reaction [protein]-L-isoaspartate + S-adenosyl-L-methionine = [protein]-L-isoaspartate alpha-methyl ester + S-adenosyl-L-homocysteine. Catalyzes the methyl esterification of L-isoaspartyl residues in peptides and proteins that result from spontaneous decomposition of normal L-aspartyl and L-asparaginyl residues. It plays a role in the repair and/or degradation of damaged proteins. The protein is Protein-L-isoaspartate O-methyltransferase of Methanospirillum hungatei JF-1 (strain ATCC 27890 / DSM 864 / NBRC 100397 / JF-1).